A 461-amino-acid chain; its full sequence is High-affinity Na(+)/H(+) antiporter NhaS3 (461 aa).

The next 11 membrane-spanning stretches (helical) occupy residues 22–42, 58–78, 113–133, 148–170, 175–197, 209–229, 239–259, 280–300, 360–380, 391–411, and 424–444; these read TEIA…IYFA, VLGE…LLLF, SEVI…EIGL, AIVA…MTIF, IPAI…KVLA, IIIG…AVVG, ISNI…SILI, LLLV…IVQL, GLII…VTGF, LAIG…AGVG, and AIIV…RAVF.

The protein belongs to the monovalent cation:proton antiporter 2 (CPA2) transporter (TC 2.A.37) family.

Its subcellular location is the cellular thylakoid membrane. Na(+)/H(+) antiporter that transports sodium from the cytoplasm into the thylakoid lumen in exchange for protons. Contributes to sodium homeostasis and tolerance. Also has Li(+)/H(+) antiport activity under K(+)-free conditions, but not under K(+)-rich conditions. This Synechocystis sp. (strain ATCC 27184 / PCC 6803 / Kazusa) protein is High-affinity Na(+)/H(+) antiporter NhaS3 (nhaS3).